The following is a 568-amino-acid chain: Phosphoprotein (568 aa).

Disordered regions lie at residues 1–22 and 40–320; these read MDQD…PGGR and PTDI…GIGE. The segment covering 7 to 20 has biased composition (basic and acidic residues); that stretch reads ILKEDSEVERKAPG. The N0 binding stretch occupies residues 33 to 41; it reads DAVLSSEPT. The span at 50 to 60 shows a compositional bias: polar residues; sequence LHNTINTSQGP. Position 68 is a phosphoserine; by host (Ser-68). Over residues 83 to 101 the composition is skewed to basic and acidic residues; sequence RSGEESRVSGRTSKPEAEA. At Ser-125 the chain carries Phosphoserine; by host. Over residues 150–168 the composition is skewed to basic and acidic residues; it reads GIEDENREMAAHPDKRGED. The span at 191 to 206 shows a compositional bias: polar residues; that stretch reads ASNNGRSMEPGSSHSA. Residues Ser-192, Ser-249, and Ser-257 each carry the phosphoserine; by host modification. Positions 344-411 are multimerization; the sequence is FESSRDASYV…SFRDIYKRFS (68 aa). Residues 364-429 adopt a coiled-coil conformation; it reads YAEMTFNVCG…LLMSNLSTLH (66 aa). The l protein binding stretch occupies residues 412–445; sequence EYQKEQNSLLMSNLSTLHIITDRGGKTDNTDSLT. 2 positions are modified to phosphoserine; by host: Ser-447 and Ser-449. The tract at residues 479–568 is interaction with the nucleocapsid (N-RNA); sequence DLIREDEFRD…VEEDIESLTN (90 aa).

This sequence belongs to the respirovirus P protein family. As to quaternary structure, homotetramer. Interacts (via multimerization domain) with polymerase L; this interaction forms the polymerase complex. Interacts (via N-terminus) with N0; this interaction allows P to chaperon N0 before encapsidation and form the N-P complex. Interacts (via C-terminus) with N-RNA template; this interaction positions the polymerase on the template. Post-translationally, phosphorylated by PKC/PRKCZ, and other unknown kinases. Phosphorylation is necessary for viral transcription and replication. The N-terminus contains the majority of phosphorylated sites. Ser-249 is the major site of phosphorylation, but is not necessary for most functions.

It localises to the host cytoplasm. Functionally, essential cofactor of the RNA polymerase L that plays a central role in the transcription and replication by forming the polymerase complex with RNA polymerase L and recruiting L to the genomic N-RNA template for RNA synthesis. Also plays a central role in the encapsidation of nascent RNA chains by forming the encapsidation complex with the nucleocapsid protein N (N-P complex). Acts as a chaperone for newly synthesized free N protein, so-called N0, allowing encapsidation of nascent RNA chains during replication. The nucleoprotein protein N prevents excessive phosphorylation of P, which leads to down-regulation of viral transcription/ replication. Participates, together with N, in the formation of viral factories (viroplasms), which are large inclusions in the host cytoplasm where replication takes place. Recruits host PI4KB and remodel the host endoplasmic reticulum membrane to form viral replication factories. In Sendai virus (strain 6/94) (SeV), this protein is Phosphoprotein (P/V/C).